The primary structure comprises 228 residues: MKLSKDTTALLKNFATINSGIMLKSGQFIMTRAVNGTTYAEANISDVIDFDVAIYDLNGFLGILSLVNDDAEISQSEDGNIKIADARSTIFWPAADPSTVVAPNKPIPFPVASAVTEIKAEDLQQLLRVSRGLQIDTIAITVKEGKIVINGFNKVEDSALTRVKYSLTLGDYDGENTFNFIINMANMKMQPGNYKLLLWAKGKQGAAKFEGEHANYVVALEADSTHDF.

This sequence belongs to the Tevenvirinae sliding clamp family. In terms of assembly, homotrimer. Interacts with the viral DNA polymerase; this interaction constitutes the polymerase holoenzyme. Interacts with the sliding-clamp-loader; this interaction allows the sliding-clamp-loader to open the sliding clamp. Interacts with the viral DNA ligase. Part of the replicase complex that includes the DNA polymerase, the polymerase clamp, the clamp loader complex, the single-stranded DNA binding protein, the primase, the helicase and the helicase assembly factor. Interacts with the viral RNA polymerase (RNAP). Part of the transcription activation complex containing host RNAP, the viral RNA polymerase sigma-like factor, the late transcription coactivator, and the sliding clamp.

Sliding clamp that encircles the genomic DNA and links the DNA polymerase to the template to control the processivity of DNA synthesis. Responsible for tethering the catalytic subunit of DNA polymerase to DNA during high-speed replication. Interaction with the sliding-clamp-loader opens the sliding clamp so that it can be loaded around the DNA template. During transcription, encircles the DNA and tethers host RNA polymerase (RNAP) to it. This is Sliding clamp (45) from Escherichia coli (Bacteriophage T4).